We begin with the raw amino-acid sequence, 477 residues long: Ribulose bisphosphate carboxylase large chain (477 aa).

Positions Met-1–Ser-2 are excised as a propeptide. At Pro-3 the chain carries N-acetylproline. The residue at position 14 (Lys-14) is an N6,N6,N6-trimethyllysine. Substrate-binding residues include Asn-123 and Thr-173. The Proton acceptor role is filled by Lys-175. A substrate-binding site is contributed by Lys-177. Mg(2+) contacts are provided by Lys-201, Asp-203, and Glu-204. At Lys-201 the chain carries N6-carboxylysine. The active-site Proton acceptor is the His-294. Substrate is bound by residues Arg-295, His-327, and Ser-379.

Belongs to the RuBisCO large chain family. Type I subfamily. In terms of assembly, heterohexadecamer of 8 large chains and 8 small chains; disulfide-linked. The disulfide link is formed within the large subunit homodimers. It depends on Mg(2+) as a cofactor. The disulfide bond which can form in the large chain dimeric partners within the hexadecamer appears to be associated with oxidative stress and protein turnover.

The protein localises to the plastid. Its subcellular location is the chloroplast. It carries out the reaction 2 (2R)-3-phosphoglycerate + 2 H(+) = D-ribulose 1,5-bisphosphate + CO2 + H2O. The enzyme catalyses D-ribulose 1,5-bisphosphate + O2 = 2-phosphoglycolate + (2R)-3-phosphoglycerate + 2 H(+). Its function is as follows. RuBisCO catalyzes two reactions: the carboxylation of D-ribulose 1,5-bisphosphate, the primary event in carbon dioxide fixation, as well as the oxidative fragmentation of the pentose substrate in the photorespiration process. Both reactions occur simultaneously and in competition at the same active site. This chain is Ribulose bisphosphate carboxylase large chain, found in Agrostis stolonifera (Creeping bentgrass).